The primary structure comprises 132 residues: D-beta-hydroxybutyrate dehydrogenase, mitochondrial (132 aa).

3–27 contacts NAD(+); the sequence is LVTGCDSGFGFSLAKHLHSKGFLVF. The residue at position 17 (lysine 17) is an N6-acetyllysine. Position 59 (serine 59) interacts with substrate. Catalysis depends on tyrosine 66, which acts as the Proton acceptor. N6-acetyllysine is present on lysine 70. Serine 77 is a glycosylation site (O-linked (GlcNAc) serine). Phosphoserine is present on serine 104.

This sequence belongs to the short-chain dehydrogenases/reductases (SDR) family. In terms of assembly, homotetramer.

Its subcellular location is the mitochondrion inner membrane. It is found in the mitochondrion matrix. It catalyses the reaction (R)-3-hydroxybutanoate + NAD(+) = acetoacetate + NADH + H(+). Its activity is regulated as follows. Requires phosphatidylcholine as an allosteric activator for enzymatic activity. The protein is D-beta-hydroxybutyrate dehydrogenase, mitochondrial of Mesocricetus auratus (Golden hamster).